Here is a 137-residue protein sequence, read N- to C-terminus: Large ribosomal subunit protein uL16 (137 aa).

It belongs to the universal ribosomal protein uL16 family. In terms of assembly, part of the 50S ribosomal subunit.

Binds 23S rRNA and is also seen to make contacts with the A and possibly P site tRNAs. In Stenotrophomonas maltophilia (strain K279a), this protein is Large ribosomal subunit protein uL16.